Consider the following 67-residue polypeptide: Large ribosomal subunit protein uL29 (67 aa).

This sequence belongs to the universal ribosomal protein uL29 family.

In Clostridium acetobutylicum (strain ATCC 824 / DSM 792 / JCM 1419 / IAM 19013 / LMG 5710 / NBRC 13948 / NRRL B-527 / VKM B-1787 / 2291 / W), this protein is Large ribosomal subunit protein uL29.